The following is a 943-amino-acid chain: Protein translocase subunit SecA (943 aa).

ATP-binding positions include glutamine 77, 95–99 (GEGKT), and aspartate 484.

The protein belongs to the SecA family. In terms of assembly, monomer and homodimer. Part of the essential Sec protein translocation apparatus which comprises SecA, SecYEG and auxiliary proteins SecDF. Other proteins may also be involved.

It is found in the cell membrane. It localises to the cytoplasm. The enzyme catalyses ATP + H2O + cellular proteinSide 1 = ADP + phosphate + cellular proteinSide 2.. Functionally, part of the Sec protein translocase complex. Interacts with the SecYEG preprotein conducting channel. Has a central role in coupling the hydrolysis of ATP to the transfer of proteins into and across the cell membrane, serving as an ATP-driven molecular motor driving the stepwise translocation of polypeptide chains across the membrane. This is Protein translocase subunit SecA from Mesoplasma florum (strain ATCC 33453 / NBRC 100688 / NCTC 11704 / L1) (Acholeplasma florum).